The following is a 422-amino-acid chain: Histidine--tRNA ligase (422 aa).

This sequence belongs to the class-II aminoacyl-tRNA synthetase family. Homodimer.

It is found in the cytoplasm. The enzyme catalyses tRNA(His) + L-histidine + ATP = L-histidyl-tRNA(His) + AMP + diphosphate + H(+). The chain is Histidine--tRNA ligase from Vibrio atlanticus (strain LGP32) (Vibrio splendidus (strain Mel32)).